The following is a 423-amino-acid chain: MDLVTKLPQNIWKTFTLFINMANYLKRLISPWSKSMTAGESLYSSQNSSSPEVIEDIGKAVTEGNLQKVIGIVKDEIQSKSRYRVKIAVTGDSGNGMSSFINALRFIGHEEEDSAPTGVVRTTKKPACYSSDSHFPYVELWDLPGLGATAQSVESYLEEMQISTFDLIIIVASEQFSSNHVKLAITMQRMRKRFYVVWTKLDRDLSTSTFPEPQLLQSIQRNIRENLQQAQVRDPPLFLISCFSPSFHDFPELRNTLQKDIFSIRYRDPLEIISQVCDKCISNKAFSLKEDQMLMKDLEAAVSSEDDTANLERGLQTYQKLFGVDDGSLQQVARSTGRLEMGSRALQFQDLIKMDRRLELMMCFAVNKFLRLLESSWWYGLWNVVTRYFRHQRHKLVIEIVAENTKTSLRKALKDSVLPPEIH.

Residues 83 to 260 enclose the IRG-type G domain; that stretch reads YRVKIAVTGD…PELRNTLQKD (178 aa). GTP contacts are provided by residues 92–99, 117–121, and 200–202; these read DSGNGMSS, TGVVR, and KLD.

This sequence belongs to the TRAFAC class dynamin-like GTPase superfamily. IRG family.

Its subcellular location is the endoplasmic reticulum. It is found in the cytoplasmic vesicle membrane. The protein resides in the lipid droplet. It carries out the reaction GTP + H2O = GDP + phosphate + H(+). Its function is as follows. Immunity-related GTPase that plays important roles in host resistance to acute infection by protozoan, such as Toxoplasma gondii and Leishmania major. Acts as a dynamin-like protein that binds to intracellular membranes and promotes remodeling and trafficking of those membranes. Acts predominantly to restrict acute protozoan infection: expression is required in both hematopoietic and non-hematopoietic cellular compartments and is dependent on Stat1. Only plays a partial role in the control of latent Toxoplasma infection. Involved in the clearance of acute protozoan infections by regulating autophagy, possibly by promoting the fusion of phagosomes with lysosomes for efficient degradation of vacuoles containing parasites. Probably involved in membrane disruption of parasite-containing vacuoles. In addition to its role in resistance to acute infection by protozoan, also acts as a negative regulator of the integrated stress response (ISR) following coxsackievirus B3 infection. Promotes differentiation of activated CD8(+) T-cells. The chain is Immunity-related GTPase family M protein 3 from Mus musculus (Mouse).